The primary structure comprises 507 residues: Maturase K (507 aa).

This sequence belongs to the intron maturase 2 family. MatK subfamily.

The protein localises to the plastid. It localises to the chloroplast. Its function is as follows. Usually encoded in the trnK tRNA gene intron. Probably assists in splicing its own and other chloroplast group II introns. This Ranunculus acris (Meadow buttercup) protein is Maturase K.